Here is a 498-residue protein sequence, read N- to C-terminus: Guanosine-5'-triphosphate,3'-diphosphate pyrophosphatase (498 aa).

This sequence belongs to the GppA/Ppx family. GppA subfamily.

The enzyme catalyses guanosine 3'-diphosphate 5'-triphosphate + H2O = guanosine 3',5'-bis(diphosphate) + phosphate + H(+). It functions in the pathway purine metabolism; ppGpp biosynthesis; ppGpp from GTP: step 2/2. Catalyzes the conversion of pppGpp to ppGpp. Guanosine pentaphosphate (pppGpp) is a cytoplasmic signaling molecule which together with ppGpp controls the 'stringent response', an adaptive process that allows bacteria to respond to amino acid starvation, resulting in the coordinated regulation of numerous cellular activities. This chain is Guanosine-5'-triphosphate,3'-diphosphate pyrophosphatase, found in Yersinia enterocolitica serotype O:8 / biotype 1B (strain NCTC 13174 / 8081).